The chain runs to 478 residues: Lysosome membrane protein 2 (478 aa).

Over 2 to 4 (ARC) the chain is Cytoplasmic. The chain crosses the membrane as a helical span at residues 5–27 (CFYTAGTLSLLLLVTSVTLLVAR). Topologically, residues 28 to 433 (VFQKAVDQTI…QLKSVINTTL (406 aa)) are lumenal. N-linked (GlcNAc...) asparagine glycosylation is found at Asn-45, Asn-68, Asn-105, and Asn-122. Residues 155–191 (IIEAMLKAYQQTLFVTHTVHELLWGYKDEVLSLVHIF) are important for interaction with GBA1. N-linked (GlcNAc...) asparagine glycans are attached at residues Asn-206, Asn-224, Asn-249, and Asn-304. Disulfide bonds link Cys-274/Cys-329 and Cys-312/Cys-318. N-linked (GlcNAc...) asparagine glycosylation is found at Asn-325, Asn-412, and Asn-430. A helical transmembrane segment spans residues 434–459 (IVTNIPYIIMALGVFFGLIFTWLACR). Residues 460 to 478 (GQGSTDEGTADERAPLIRT) lie on the Cytoplasmic side of the membrane.

Belongs to the CD36 family. As to quaternary structure, interacts with GBA1. In terms of processing, acylated by palmitic acid group(s).

It is found in the lysosome membrane. Functionally, acts as a lysosomal receptor for glucosylceramidase (GBA1) targeting. The chain is Lysosome membrane protein 2 (Scarb2) from Rattus norvegicus (Rat).